Reading from the N-terminus, the 414-residue chain is Histidine--tRNA ligase (414 aa).

It belongs to the class-II aminoacyl-tRNA synthetase family. In terms of assembly, homodimer.

The protein resides in the cytoplasm. The enzyme catalyses tRNA(His) + L-histidine + ATP = L-histidyl-tRNA(His) + AMP + diphosphate + H(+). This is Histidine--tRNA ligase from Solibacter usitatus (strain Ellin6076).